Consider the following 882-residue polypeptide: Translation initiation factor IF-2 (882 aa).

Disordered regions lie at residues 67–202 and 223–278; these read KTVS…EKAR and ERYG…KHMK. 2 stretches are compositionally biased toward basic and acidic residues: residues 95 to 152 and 161 to 202; these read VKRD…EAKA and EQPK…EKAR. A compositionally biased stretch (basic residues) spans 251–264; sequence GRRNRNKTQTKSKR. Residues 265–274 show a composition bias toward basic and acidic residues; the sequence is GGKDAREGRE. Residues 382 to 551 enclose the tr-type G domain; it reads PRAPVVTIMG…LLQAEVLELK (170 aa). The interval 391 to 398 is G1; sequence GHVDHGKT. Residue 391–398 participates in GTP binding; sequence GHVDHGKT. The interval 416–420 is G2; sequence GITQH. The segment at 437 to 440 is G3; sequence DTPG. GTP is bound by residues 437-441 and 491-494; these read DTPGH and NKMD. The G4 stretch occupies residues 491–494; the sequence is NKMD. The segment at 527 to 529 is G5; the sequence is SAK.

It belongs to the TRAFAC class translation factor GTPase superfamily. Classic translation factor GTPase family. IF-2 subfamily.

It localises to the cytoplasm. Functionally, one of the essential components for the initiation of protein synthesis. Protects formylmethionyl-tRNA from spontaneous hydrolysis and promotes its binding to the 30S ribosomal subunits. Also involved in the hydrolysis of GTP during the formation of the 70S ribosomal complex. In Shewanella amazonensis (strain ATCC BAA-1098 / SB2B), this protein is Translation initiation factor IF-2.